Here is a 132-residue protein sequence, read N- to C-terminus: Small ribosomal subunit protein uS11 (132 aa).

The protein belongs to the universal ribosomal protein uS11 family. In terms of assembly, part of the 30S ribosomal subunit. Interacts with proteins S7 and S18. Binds to IF-3.

Located on the platform of the 30S subunit, it bridges several disparate RNA helices of the 16S rRNA. Forms part of the Shine-Dalgarno cleft in the 70S ribosome. The polypeptide is Small ribosomal subunit protein uS11 (Clostridium botulinum (strain 657 / Type Ba4)).